We begin with the raw amino-acid sequence, 206 residues long: N-(5'-phosphoribosyl)anthranilate isomerase (206 aa).

Belongs to the TrpF family.

It catalyses the reaction N-(5-phospho-beta-D-ribosyl)anthranilate = 1-(2-carboxyphenylamino)-1-deoxy-D-ribulose 5-phosphate. The protein operates within amino-acid biosynthesis; L-tryptophan biosynthesis; L-tryptophan from chorismate: step 3/5. This chain is N-(5'-phosphoribosyl)anthranilate isomerase, found in Pseudomonas syringae pv. tomato (strain ATCC BAA-871 / DC3000).